Reading from the N-terminus, the 154-residue chain is Transcriptional regulator MraZ (154 aa).

2 consecutive SpoVT-AbrB domains span residues 6–53 and 83–126; these read NSEA…PENV and VEVI…SKEI.

The protein belongs to the MraZ family. In terms of assembly, forms oligomers.

It is found in the cytoplasm. It localises to the nucleoid. The sequence is that of Transcriptional regulator MraZ from Phocaeicola vulgatus (strain ATCC 8482 / DSM 1447 / JCM 5826 / CCUG 4940 / NBRC 14291 / NCTC 11154) (Bacteroides vulgatus).